Reading from the N-terminus, the 249-residue chain is MGIIQTKDLNLYYGNVQALKKINLDFSANTVTALIGPSGCGKSTFLRTINRMNDLISTVKIDGEVMFEGKDVYKDYDEIELRKRVGMVFQKPNPFPMSIYDNVAYGPRIHGIKNKGKLDEIVERSLKGSALWEEVKDRLKKSALGLSGGQQQRLCIARTLAVEPEVLLMDEPTSALDPISTLKIEELMDELKHKYTVIIVTHNMQQAGRISDNTAFFLNGEVVENGKTEDIFYKPKDKRTEDYITGRFG.

The 241-residue stretch at 4-244 folds into the ABC transporter domain; sequence IQTKDLNLYY…PKDKRTEDYI (241 aa). 36–43 contributes to the ATP binding site; the sequence is GPSGCGKS.

This sequence belongs to the ABC transporter superfamily. Phosphate importer (TC 3.A.1.7) family. The complex is composed of two ATP-binding proteins (PstB), two transmembrane proteins (PstC and PstA) and a solute-binding protein (PstS).

It localises to the cell membrane. The enzyme catalyses phosphate(out) + ATP + H2O = ADP + 2 phosphate(in) + H(+). Its function is as follows. Part of the ABC transporter complex PstSACB involved in phosphate import. Responsible for energy coupling to the transport system. This chain is Phosphate import ATP-binding protein PstB, found in Clostridium acetobutylicum (strain ATCC 824 / DSM 792 / JCM 1419 / IAM 19013 / LMG 5710 / NBRC 13948 / NRRL B-527 / VKM B-1787 / 2291 / W).